Reading from the N-terminus, the 121-residue chain is MAFDKDAIIASLKDATILDLADLVSAIEEEFNVSAAAPVAAAGAADGAAAAKSEFDVELTSAGTAKVKVIKAVREATGLGLKEAKDLVDNAPSVVKEGLSEDDANALKESLEATGASVTVK.

The protein belongs to the bacterial ribosomal protein bL12 family. In terms of assembly, homodimer. Part of the ribosomal stalk of the 50S ribosomal subunit. Forms a multimeric L10(L12)X complex, where L10 forms an elongated spine to which 2 to 4 L12 dimers bind in a sequential fashion. Binds GTP-bound translation factors.

Functionally, forms part of the ribosomal stalk which helps the ribosome interact with GTP-bound translation factors. Is thus essential for accurate translation. The sequence is that of Large ribosomal subunit protein bL12 from Leuconostoc mesenteroides subsp. mesenteroides (strain ATCC 8293 / DSM 20343 / BCRC 11652 / CCM 1803 / JCM 6124 / NCDO 523 / NBRC 100496 / NCIMB 8023 / NCTC 12954 / NRRL B-1118 / 37Y).